The sequence spans 207 residues: Peptidyl-tRNA hydrolase (207 aa).

Tyr-14 is a binding site for tRNA. His-19 (proton acceptor) is an active-site residue. Positions 68, 70, and 116 each coordinate tRNA.

It belongs to the PTH family. Monomer.

The protein localises to the cytoplasm. It catalyses the reaction an N-acyl-L-alpha-aminoacyl-tRNA + H2O = an N-acyl-L-amino acid + a tRNA + H(+). Its function is as follows. Hydrolyzes ribosome-free peptidyl-tRNAs (with 1 or more amino acids incorporated), which drop off the ribosome during protein synthesis, or as a result of ribosome stalling. Catalyzes the release of premature peptidyl moieties from peptidyl-tRNA molecules trapped in stalled 50S ribosomal subunits, and thus maintains levels of free tRNAs and 50S ribosomes. This Hyphomonas neptunium (strain ATCC 15444) protein is Peptidyl-tRNA hydrolase.